The following is a 112-amino-acid chain: MPRKLLEERSTGSATKWLREEEKIEKKSRADQLKIKFMQTRDNSDINSIFSEPPSEFSVLCDDDDCDKGSVVSSTLTTSIRKTFSSFRFDENQRKKGTRKRRSSEVDSKEKS.

The disordered stretch occupies residues 91-112 (ENQRKKGTRKRRSSEVDSKEKS). Residues 103 to 112 (SSEVDSKEKS) are compositionally biased toward basic and acidic residues.

This is an uncharacterized protein from Caenorhabditis elegans.